The primary structure comprises 566 residues: Proline--tRNA ligase (566 aa).

It belongs to the class-II aminoacyl-tRNA synthetase family. ProS type 1 subfamily. In terms of assembly, homodimer.

It localises to the cytoplasm. It catalyses the reaction tRNA(Pro) + L-proline + ATP = L-prolyl-tRNA(Pro) + AMP + diphosphate. Its function is as follows. Catalyzes the attachment of proline to tRNA(Pro) in a two-step reaction: proline is first activated by ATP to form Pro-AMP and then transferred to the acceptor end of tRNA(Pro). As ProRS can inadvertently accommodate and process non-cognate amino acids such as alanine and cysteine, to avoid such errors it has two additional distinct editing activities against alanine. One activity is designated as 'pretransfer' editing and involves the tRNA(Pro)-independent hydrolysis of activated Ala-AMP. The other activity is designated 'posttransfer' editing and involves deacylation of mischarged Ala-tRNA(Pro). The misacylated Cys-tRNA(Pro) is not edited by ProRS. This is Proline--tRNA ligase from Bacillus cereus (strain B4264).